A 285-amino-acid chain; its full sequence is Sulfotransferase 2A2 (285 aa).

3'-phosphoadenylyl sulfate-binding residues include lysine 44, serine 45, glycine 46, threonine 47, asparagine 48, and tryptophan 49. Histidine 99 serves as the catalytic Proton acceptor. The 3'-phosphoadenylyl sulfate site is built by arginine 121, serine 129, tyrosine 184, serine 218, methionine 223, arginine 247, lysine 248, and glycine 249.

This sequence belongs to the sulfotransferase 1 family.

The protein resides in the cytoplasm. The enzyme catalyses an alcohol + 3'-phosphoadenylyl sulfate = an alkyl sulfate + adenosine 3',5'-bisphosphate + H(+). Its function is as follows. Sulfotransferase that utilizes 3'-phospho-5'-adenylyl sulfate (PAPS) as sulfonate donor to catalyze the sulfate conjugation of a potential wide variety of acceptor molecules bearing a hydroxyl group. Sulfonation increases the water solubility of most compounds, and therefore their renal excretion, but it can also result in bioactivation to form active metabolites. The protein is Sulfotransferase 2A2 of Mus musculus (Mouse).